The chain runs to 226 residues: Ribonuclease 3 (226 aa).

Positions 6-128 (INRLQRKLGY…LIGGIFLDSD (123 aa)) constitute an RNase III domain. E41 lines the Mg(2+) pocket. Residue D45 is part of the active site. 2 residues coordinate Mg(2+): D114 and E117. E117 is a catalytic residue. Residues 155–225 (DPKTRLQEFL…AEQALKKLEL (71 aa)) enclose the DRBM domain.

The protein belongs to the ribonuclease III family. As to quaternary structure, homodimer. Requires Mg(2+) as cofactor.

It is found in the cytoplasm. It catalyses the reaction Endonucleolytic cleavage to 5'-phosphomonoester.. Functionally, digests double-stranded RNA. Involved in the processing of primary rRNA transcript to yield the immediate precursors to the large and small rRNAs (23S and 16S). Processes some mRNAs, and tRNAs when they are encoded in the rRNA operon. Processes pre-crRNA and tracrRNA of type II CRISPR loci if present in the organism. This is Ribonuclease 3 from Pectobacterium carotovorum subsp. carotovorum (strain PC1).